A 461-amino-acid chain; its full sequence is ATP synthase subunit beta 2 (461 aa).

151-158 (GGAGVGKT) provides a ligand contact to ATP.

Belongs to the ATPase alpha/beta chains family. As to quaternary structure, F-type ATPases have 2 components, CF(1) - the catalytic core - and CF(0) - the membrane proton channel. CF(1) has five subunits: alpha(3), beta(3), gamma(1), delta(1), epsilon(1). CF(0) has three main subunits: a(1), b(2) and c(9-12). The alpha and beta chains form an alternating ring which encloses part of the gamma chain. CF(1) is attached to CF(0) by a central stalk formed by the gamma and epsilon chains, while a peripheral stalk is formed by the delta and b chains.

It localises to the cell inner membrane. It catalyses the reaction ATP + H2O + 4 H(+)(in) = ADP + phosphate + 5 H(+)(out). Produces ATP from ADP in the presence of a proton gradient across the membrane. The catalytic sites are hosted primarily by the beta subunits. This Vibrio campbellii (strain ATCC BAA-1116) protein is ATP synthase subunit beta 2.